The following is a 361-amino-acid chain: Mitogen-activated protein kinase 14 (361 aa).

The region spanning 25-309 (YQNLTPVGSG…AAEALAHSYF (285 aa)) is the Protein kinase domain. ATP-binding positions include 31 to 39 (VGSGAYGSV) and lysine 54. Aspartate 151 serves as the catalytic Proton acceptor. Phosphothreonine is present on threonine 181. The TXY signature appears at 181 to 183 (TGY). The residue at position 183 (tyrosine 183) is a Phosphotyrosine.

It belongs to the protein kinase superfamily. CMGC Ser/Thr protein kinase family. MAP kinase subfamily. Mg(2+) serves as cofactor. Post-translationally, dually phosphorylated on Thr-181 and Tyr-183, which activates the enzyme.

The enzyme catalyses L-seryl-[protein] + ATP = O-phospho-L-seryl-[protein] + ADP + H(+). It catalyses the reaction L-threonyl-[protein] + ATP = O-phospho-L-threonyl-[protein] + ADP + H(+). Its activity is regulated as follows. Activated by tyrosine and threonine phosphorylation. Serine/threonine kinase which acts as an essential component of the MAP kinase signal transduction pathway. mapk14a is one of the four p38 MAPKs which play an important role in the cascades of cellular responses evoked by extracellular stimuli such as pro-inflammatory cytokines or physical stress leading to direct activation of transcription factors. Accordingly, p38 MAPKs phosphorylate a broad range of proteins and it has been estimated that they may have approximately 200 to 300 substrates each. Some of the targets are downstream kinases which are activated through phosphorylation and further phosphorylate additional targets. MPK2 is activated by upstream MAPKK/MAPKKK and stimulates MAPKAP kinase 2 to phosphorylate small heat shock proteins. Does not phosphorylate myelin basic protein or MAPKAP kinase 1. This Xenopus laevis (African clawed frog) protein is Mitogen-activated protein kinase 14 (mapk14).